A 447-amino-acid polypeptide reads, in one-letter code: Gastrin/cholecystokinin type B receptor (447 aa).

At 1–57 the chain is on the extracellular side; it reads MELLKLNRSVQGTGPGPGASLCRPGAPLLNSSSVGNLSCEPPRIRGAGTRELELAIR. N-linked (GlcNAc...) asparagine glycans are attached at residues N7, N30, and N36. The chain crosses the membrane as a helical span at residues 58–79; it reads ITLYAVIFLMSVGGNMLIIVVL. Over 80 to 87 the chain is Cytoplasmic; that stretch reads GLSRRLRT. The helical transmembrane segment at 88–109 threads the bilayer; the sequence is VTNAFLLSLAVSDLLLAVACMP. The Extracellular segment spans residues 110 to 131; it reads FTLLPNLMGTFIFGTVICKAVS. An intrachain disulfide couples C127 to C205. The chain crosses the membrane as a helical span at residues 132 to 150; it reads YLMGVSVSVSTLSLVAIAL. The Cytoplasmic segment spans residues 151-170; that stretch reads ERYSAICRPLQARVWQTRSH. Residues 171-189 form a helical membrane-spanning segment; it reads AARVIVATWLLSGLLMVPY. At 190–219 the chain is on the extracellular side; that stretch reads PVYTVVQPVGPRVLQCVHRWPSARVRQTWS. The helical transmembrane segment at 220-242 threads the bilayer; the sequence is VLLLLLLFFIPGVVMAVAYGLIS. Over 243-333 the chain is Cytoplasmic; that stretch reads RELYLGLRFD…KLLAKKRVVR (91 aa). The interval 258–285 is disordered; it reads DSQSRVRNQGGLPGAVHQNGRCRPETGA. The chain crosses the membrane as a helical span at residues 334–355; the sequence is MLLVIVVLFFLCWLPVYSANTW. At 356–373 the chain is on the extracellular side; that stretch reads RAFDGPGAHRALSGAPIS. The helical transmembrane segment at 374 to 394 threads the bilayer; it reads FIHLLSYASACVNPLVYCFMH. Residues 395 to 447 are Cytoplasmic-facing; sequence RRFRQACLETCARCCPRPPRARPRALPDEDPPTPSIASLSRLSYTTISTLGPG. Residue C408 is the site of S-palmitoyl cysteine attachment.

It belongs to the G-protein coupled receptor 1 family. In terms of tissue distribution, isoform 1 is expressed in brain, pancreas, stomach, the colon cancer cell line LoVo and the T-lymphoblastoma Jurkat, but not in heart, placenta, liver, lung, skeletal muscle, kidney or the stomach cancer cell line AGS. Expressed at high levels in the small cell lung cancer cell line NCI-H510, at lower levels in NCI-H345, NCI-H69 and GLC-28 cell lines, not expressed in GLC-19 cell line. Within the stomach, expressed at high levels in the mucosa of the gastric fundus and at low levels in the antrum and duodenum. Isoform 2 is present in pancreatic cancer cells and colorectal cancer cells, but not in normal pancreas or colonic mucosa. Isoform 3 is expressed in brain, pancreas, stomach, the stomach cancer cell line AGS and the colon cancer cell line LoVo.

It localises to the cell membrane. In terms of biological role, receptor for gastrin and cholecystokinin. The CCK-B receptors occur throughout the central nervous system where they modulate anxiety, analgesia, arousal, and neuroleptic activity. This receptor mediates its action by association with G proteins that activate a phosphatidylinositol-calcium second messenger system. Its function is as follows. Isoform 2 is constitutively activated and may regulate cancer cell proliferation via a gastrin-independent mechanism. This is Gastrin/cholecystokinin type B receptor from Homo sapiens (Human).